Consider the following 281-residue polypeptide: Ornithine lipid ester-linked acyl 2-hydroxylase (281 aa).

Residues 1–24 show a composition bias toward polar residues; the sequence is MTESPLSAPAPTSNQSPAPEQTFG. The interval 1-29 is disordered; that stretch reads MTESPLSAPAPTSNQSPAPEQTFGTAGIA.

The protein belongs to the aspartyl/asparaginyl beta-hydroxylase family.

The catalysed reaction is an N(2)-[(3R)-3-(2-saturated-acyloxy)acyl]-L-ornithine lipid + 2-oxoglutarate + O2 = a 2-hydroxyornithine lipid + succinate + CO2. The protein operates within lipid metabolism. Functionally, involved in the biosynthesis of ornithine lipids (OLs), which are phosphorus-free membrane lipids. Catalyzes the hydroxylation at the 2 position of the secondary fatty acid of OL. Contributes to symbiotic performance and acid tolerance. The chain is Ornithine lipid ester-linked acyl 2-hydroxylase from Rhizobium tropici.